The chain runs to 333 residues: MPQPPKRPRKPAPAAVKTAPAKGELHPRNRHQGRYDFPALIKVSPELGDFVITNPYGKPSIDFANPAAVKVFNRALLAQYYGIRHWDIPDGYLCPPIPGRADYLHNLADLLATDNDGQIPRGAGIHALDIGVGANCIYPLIGHCEYGWHFIGADIAPAALASARAIVAANPQLAGGIELRQQANAEQIFLGLLQADERVDLTLCNPPFHASADEATRGSTRKWRNLGKLDPRRKLPVLNFGGQAAELWCPGGEAAFLKRMASESAQVAGQVLWFSSLVSKGSNVELLQGWLAKAGAAEVRILGMSQGQKQSRLVAWTFKDGEARGAWRQSRWR.

The segment covering 1–10 (MPQPPKRPRK) has biased composition (basic residues). The disordered stretch occupies residues 1–31 (MPQPPKRPRKPAPAAVKTAPAKGELHPRNRH). Over residues 12-22 (APAAVKTAPAK) the composition is skewed to low complexity.

Belongs to the methyltransferase superfamily. METTL16/RlmF family.

The protein resides in the cytoplasm. The enzyme catalyses adenosine(1618) in 23S rRNA + S-adenosyl-L-methionine = N(6)-methyladenosine(1618) in 23S rRNA + S-adenosyl-L-homocysteine + H(+). In terms of biological role, specifically methylates the adenine in position 1618 of 23S rRNA. This Ectopseudomonas mendocina (strain ymp) (Pseudomonas mendocina) protein is Ribosomal RNA large subunit methyltransferase F.